Here is a 534-residue protein sequence, read N- to C-terminus: Benzaldehyde dehydrogenase, mitochondrial (534 aa).

A mitochondrion-targeting transit peptide spans 1 to 29 (MAAHRFSSLLSRSVPLLSRGGKQSYLGRG). NAD(+)-binding positions include 199 to 202 (IPWN), 225 to 228 (KTAE), 258 to 259 (GP), 278 to 279 (GS), and 301 to 303 (ELG). The Proton acceptor role is filled by Glu301. Cys335 functions as the Nucleophile in the catalytic mechanism. NAD(+) is bound by residues 381–385 (DQFEK) and 432–434 (EIF).

It belongs to the aldehyde dehydrogenase family. In terms of assembly, homotetramer. As to expression, expressed predominantly in the upper and lower flower petal lobes, and, at low levels, in flower tubes, pistils, stamens and sepals.

It localises to the mitochondrion. It carries out the reaction an aldehyde + NAD(+) + H2O = a carboxylate + NADH + 2 H(+). The enzyme catalyses acetaldehyde + NAD(+) + H2O = acetate + NADH + 2 H(+). The catalysed reaction is benzaldehyde + NAD(+) + H2O = benzoate + NADH + 2 H(+). It catalyses the reaction 2-phenylacetaldehyde + NAD(+) + H2O = 2-phenylacetate + NADH + 2 H(+). The protein operates within aromatic compound metabolism. Its activity is regulated as follows. Inhibited by disulfiram. In terms of biological role, component of the floral volatile benzenoid/phenylpropanoid (FVBP) biosynthetic pathway. Catalyzes the oxidation of benzaldehyde to benzoic acid (BA). Capable of oxidizing a broad spectrum of aliphatic aldehydes; increased carbon chain length results in a decrease in its efficiency. This Antirrhinum majus (Garden snapdragon) protein is Benzaldehyde dehydrogenase, mitochondrial.